The following is a 197-amino-acid chain: Putative methyltransferase Mtx subunit A (197 aa).

This sequence belongs to the MtrA family. As to quaternary structure, may be part of a complex composed of 3 subunits; MtxA, MtxH and MtxX.

The chain is Putative methyltransferase Mtx subunit A (mtxA) from Methanosarcina barkeri (strain Fusaro / DSM 804).